An 843-amino-acid chain; its full sequence is F-box only protein 11 (843 aa).

Positions 1–63 (MVAEESGPGA…RVSGKSQDLS (63 aa)) are disordered. Polar residues predominate over residues 30-45 (PTKNSMEGASTSTTEN). The F-box domain occupies 69 to 115 (QYLQEKLPDEVVLKIFSYLLEQDLCRAACVCKRFSELANDPILWKRL). PbH1 repeat units follow at residues 311-333 (GACPTIKHCNISDCENVGLYITD), 334-356 (HAQGIYEDNEISNNALAGIWVKN), 357-379 (HGNPIIRRNHIHHGRDVGVFTFD), 380-402 (HGMGYFESCNIHRNRIAGFEVKA), 403-425 (YANPTVVRCEIHHGQTGGIYVHE), 426-448 (KGRGQFIENKIYANNFAGVWITS), 449-471 (NSDPTIRGNSIFNGNQGGVYIFG), 472-494 (DGRGLIEGNDIYGNALAGIQIRT), 495-517 (NSCPIVRHNKIHDGQHGGIYVHE), 518-540 (KGQGVIEENEVYSNTLAGVWVTT), 541-563 (GSTPVLRRNRIHSGKQVGVYFYD), 564-586 (NGHGVLEDNDIYNHMYSGVQIRT), 587-609 (GSNPKIRRNKIWGGQNGGILVYN), 610-632 (SGLGCIEDNEIFDNAMAGVWIKT), 633-655 (DSNPTLRRNKIHDGRDGGICIFN), 656-678 (GGRGLLEENDIFRNAQAGVLIST), 679-701 (NSHPVLRKNRIFDGFAAGIEITN), 702-724 (HATATLEGNQIFNNRFGGLFLAS), and 725-746 (GVNVTMKDNKIMNNQDAIEKAV). Residues 749-820 (GQCLYKISSY…LSNPCTLAGE (72 aa)) form a UBR-type zinc finger.

Component of the SCF(FBXO11) complex consisting of CUL1, RBX1, SKP1 and FBXO11. Interacts with CIITA.

Its subcellular location is the nucleus. The protein resides in the chromosome. It functions in the pathway protein modification; protein ubiquitination. In terms of biological role, substrate recognition component of a SCF (SKP1-CUL1-F-box protein) E3 ubiquitin-protein ligase complex which mediates the ubiquitination and subsequent proteasomal degradation of target proteins, such as DTL/CDT2, BCL6, SNAI1 and PRDM1/BLIMP1. The SCF(FBXO11) complex mediates ubiquitination and degradation of BCL6, thereby playing a role in the germinal center B-cells terminal differentiation toward memory B-cells and plasma cells. The SCF(FBXO11) complex also mediates ubiquitination and degradation of DTL, an important step for the regulation of TGF-beta signaling, cell migration and the timing of the cell-cycle progression and exit. The SCF(FBXO11) complex also catalyzes ubiquitination and degradation of GSK3B-phosphorylated SNAI1. Binds to and neddylates phosphorylated p53/TP53, inhibiting its transcriptional activity. Plays a role in the regulatiom of erythropoiesis but not myelopoiesis or megakaryopoiesis. Mechanistically, activates erythroid genes by mediating the degradation of BAHD1, a heterochromatin-associated protein that recruits corepressors to H3K27me3 marks. Participates in macrophage cell death and inflammation in response to bacterial toxins by regulating the expression of complement 5a receptor 1/C5AR1 and IL-1beta. Acts as a critical regulator to determine the level of MHC-II by mediating the recognition of degron at the P/S/T domain of CIITA leading to its ubiquitination and subsequent degradation via the proteasome. Participates in the antiviral repsonse by initiating the activation of TBK1-IRF3-IFN-I axis. Mediates the 'Lys-63'-linked ubiquitination of TRAF3 to strengthen the interaction between TRAF3 and TBK1. The polypeptide is F-box only protein 11 (Fbxo11) (Rattus norvegicus (Rat)).